Here is a 102-residue protein sequence, read N- to C-terminus: MYLMRKIVFVSCVILGLAACSSQPEQIGGGVYDMKTVQEYNARVISGNTVTQTQKDKITQQIDTSLKLNQSDNKVKTRTRRVLPVLPVTPSVGYHYNYHYFR.

The chain crosses the membrane as a helical span at residues 7–23; sequence IVFVSCVILGLAACSSQ.

Its subcellular location is the membrane. This is an uncharacterized protein from Haemophilus influenzae (strain ATCC 51907 / DSM 11121 / KW20 / Rd).